The primary structure comprises 847 residues: uncharacterized protein (847 aa).

This is an uncharacterized protein from Penicillium chrysogenum virus (isolate Caston/2003) (PcV).